The sequence spans 121 residues: Phosphoribosyl-AMP cyclohydrolase (121 aa).

Position 76 (D76) interacts with Mg(2+). C77 contributes to the Zn(2+) binding site. Mg(2+) contacts are provided by D78 and D80. Residues C93 and C100 each contribute to the Zn(2+) site.

The protein belongs to the PRA-CH family. As to quaternary structure, homodimer. Requires Mg(2+) as cofactor. Zn(2+) is required as a cofactor.

Its subcellular location is the cytoplasm. The catalysed reaction is 1-(5-phospho-beta-D-ribosyl)-5'-AMP + H2O = 1-(5-phospho-beta-D-ribosyl)-5-[(5-phospho-beta-D-ribosylamino)methylideneamino]imidazole-4-carboxamide. The protein operates within amino-acid biosynthesis; L-histidine biosynthesis; L-histidine from 5-phospho-alpha-D-ribose 1-diphosphate: step 3/9. Functionally, catalyzes the hydrolysis of the adenine ring of phosphoribosyl-AMP. The polypeptide is Phosphoribosyl-AMP cyclohydrolase (Paracoccus denitrificans (strain Pd 1222)).